The primary structure comprises 635 residues: Glutamyl-tRNA(Gln) amidotransferase subunit E (635 aa).

Positions 415 to 437 (LPDGNTEYMRPLPGKARMYPETD) are disordered.

It belongs to the GatB/GatE family. GatE subfamily. As to quaternary structure, heterodimer of GatD and GatE.

It catalyses the reaction L-glutamyl-tRNA(Gln) + L-glutamine + ATP + H2O = L-glutaminyl-tRNA(Gln) + L-glutamate + ADP + phosphate + H(+). Allows the formation of correctly charged Gln-tRNA(Gln) through the transamidation of misacylated Glu-tRNA(Gln) in organisms which lack glutaminyl-tRNA synthetase. The reaction takes place in the presence of glutamine and ATP through an activated gamma-phospho-Glu-tRNA(Gln). The GatDE system is specific for glutamate and does not act on aspartate. The chain is Glutamyl-tRNA(Gln) amidotransferase subunit E from Pyrococcus horikoshii (strain ATCC 700860 / DSM 12428 / JCM 9974 / NBRC 100139 / OT-3).